Consider the following 151-residue polypeptide: Putative pre-16S rRNA nuclease (151 aa).

The protein belongs to the YqgF nuclease family.

It localises to the cytoplasm. In terms of biological role, could be a nuclease involved in processing of the 5'-end of pre-16S rRNA. The polypeptide is Putative pre-16S rRNA nuclease (Gloeothece citriformis (strain PCC 7424) (Cyanothece sp. (strain PCC 7424))).